The chain runs to 192 residues: Phosphoheptose isomerase (192 aa).

The 158-residue stretch at Leu-35–Asn-192 folds into the SIS domain. Asn-50–Gly-52 is a binding site for substrate. Zn(2+) contacts are provided by His-59 and Glu-63. Substrate contacts are provided by residues Glu-63, Asn-92–Asp-93, Ser-118–Ser-120, Ser-123, and Gln-170. Zn(2+) contacts are provided by Gln-170 and His-178.

Belongs to the SIS family. GmhA subfamily. In terms of assembly, homotetramer. Zn(2+) serves as cofactor.

It is found in the cytoplasm. The catalysed reaction is 2 D-sedoheptulose 7-phosphate = D-glycero-alpha-D-manno-heptose 7-phosphate + D-glycero-beta-D-manno-heptose 7-phosphate. Its pathway is carbohydrate biosynthesis; D-glycero-D-manno-heptose 7-phosphate biosynthesis; D-glycero-alpha-D-manno-heptose 7-phosphate and D-glycero-beta-D-manno-heptose 7-phosphate from sedoheptulose 7-phosphate: step 1/1. It participates in bacterial outer membrane biogenesis; LPS core biosynthesis. In terms of biological role, catalyzes the isomerization of sedoheptulose 7-phosphate in D-glycero-D-manno-heptose 7-phosphate. This chain is Phosphoheptose isomerase, found in Helicobacter pylori (strain ATCC 700392 / 26695) (Campylobacter pylori).